The chain runs to 100 residues: RxLR effector protein Avrblb2 (100 aa).

An N-terminal signal peptide occupies residues 1–22; the sequence is MRSFLYGVLAFAVLARSSAVAA. A RxLR-dEER motif is present at residues 43–57; it reads RSLRIEAQEVIQSGR. The short motif at 78–82 is the Calmodulin-binding motif element; sequence RPDIK.

The protein belongs to the RxLR effector family. As to quaternary structure, interacts with the host papain-like cysteine protease C14. Interacts with the host calmodulin.

It is found in the secreted. Its subcellular location is the host cell membrane. Secreted effector that acts as an elicitor of hypersensitive response (HR) specifically on plants carrying defense protein Rpi-blb2. Enhances P.infestans colonization of Nicotiana benthamiana leaves. Interacts with, and subsequently prevents secretion into the apoplast of the host papain-like cysteine protease C14, thus promoting virulence by interfering with the execution of host defenses. Associates with calmodulin at the host plasma membrane to interfere with plant defense-associated calcium signaling in hosts. In Phytophthora infestans (strain T30-4) (Potato late blight agent), this protein is RxLR effector protein Avrblb2.